The sequence spans 270 residues: Release factor glutamine methyltransferase (270 aa).

S-adenosyl-L-methionine is bound by residues 112 to 116 (GTGSG), Asp-135, Trp-162, and Asn-178. 178 to 181 (NPPY) contacts substrate.

This sequence belongs to the protein N5-glutamine methyltransferase family. PrmC subfamily.

The catalysed reaction is L-glutaminyl-[peptide chain release factor] + S-adenosyl-L-methionine = N(5)-methyl-L-glutaminyl-[peptide chain release factor] + S-adenosyl-L-homocysteine + H(+). Its function is as follows. Methylates the class 1 translation termination release factors RF1/PrfA and RF2/PrfB on the glutamine residue of the universally conserved GGQ motif. The polypeptide is Release factor glutamine methyltransferase (Bordetella pertussis (strain Tohama I / ATCC BAA-589 / NCTC 13251)).